The chain runs to 311 residues: Insulin-like growth factor-binding protein 2 (311 aa).

The first 36 residues, 1 to 36 (MALGGVGRGGAARAAWPRLLLAALAPALALAGPALP), serve as a signal peptide directing secretion. The IGFBP N-terminal domain maps to 38 to 120 (VLFRCPPCTA…VQGQGTCARP (83 aa)). 6 cysteine pairs are disulfide-bonded: C42-C70, C45-C72, C53-C73, C61-C76, C84-C97, and C91-C117. Disordered stretches follow at residues 112-168 (QGQG…PLKT) and 188-210 (GKVG…TGRT). Residues 209–291 (RTPCQQELDQ…APTIRGDPEC (83 aa)) form the Thyroglobulin type-1 domain. 3 disulfides stabilise this stretch: C212-C246, C257-C268, and C270-C291. The short motif at 286–288 (RGD) is the Cell attachment site element.

In terms of assembly, binds IGF2 more than IGF1.

Its subcellular location is the secreted. Its function is as follows. Inhibits IGF-mediated growth and developmental rates. IGF-binding proteins prolong the half-life of the IGFs and have been shown to either inhibit or stimulate the growth promoting effects of the IGFs on cell culture. They alter the interaction of IGFs with their cell surface receptors. The sequence is that of Insulin-like growth factor-binding protein 2 (IGFBP2) from Gallus gallus (Chicken).